The primary structure comprises 211 residues: Large ribosomal subunit protein bL25 (211 aa).

The disordered stretch occupies residues 188–211; sequence APKAAKVSTDDEAAAPAEEAPAAE. The span at 201–211 shows a compositional bias: low complexity; the sequence is AAPAEEAPAAE.

This sequence belongs to the bacterial ribosomal protein bL25 family. CTC subfamily. As to quaternary structure, part of the 50S ribosomal subunit; part of the 5S rRNA/L5/L18/L25 subcomplex. Contacts the 5S rRNA. Binds to the 5S rRNA independently of L5 and L18.

Its function is as follows. This is one of the proteins that binds to the 5S RNA in the ribosome where it forms part of the central protuberance. The chain is Large ribosomal subunit protein bL25 from Colwellia psychrerythraea (strain 34H / ATCC BAA-681) (Vibrio psychroerythus).